A 2286-amino-acid polypeptide reads, in one-letter code: Non-reducing polyketide synthase fsr1 (2286 aa).

The tract at residues 7-342 (LYLFGDQTFD…IYTALKKTSL (336 aa)) is N-terminal acylcarrier protein transacylase domain (SAT). A Ketosynthase family 3 (KS3) domain is found at 368 to 805 (KPKLAIVAMS…GGNSALLIQD (438 aa)). Active-site for beta-ketoacyl synthase activity residues include C540, H675, and H722. The interval 905-1195 (VFTFTGQGAQ…GMVKPTLGQQ (291 aa)) is acyl/malonyl transferases. S996 (for acyl/malonyl transferase activity) is an active-site residue. The interval 1285-1417 (HSVVEESGDS…CVVLFKDRSH (133 aa)) is N-terminal hotdog fold. Residues 1285–1591 (HSVVEESGDS…IQGVPRRVLK (307 aa)) form the PKS/mFAS DH domain. The product template (PT) domainn stretch occupies residues 1296 to 1588 (KTGIVVEADI…QIAIQGVPRR (293 aa)). The active-site Proton acceptor; for dehydratase activity is H1317. The tract at residues 1444–1591 (SARFNRPMAY…IQGVPRRVLK (148 aa)) is C-terminal hotdog fold. D1504 functions as the Proton donor; for dehydratase activity in the catalytic mechanism. The tract at residues 1600 to 1639 (KKGQPQRQTQDKPRNTPSQTKDSTPKPAQNKPAAKVEPPK) is disordered. One can recognise a Carrier 1 domain in the interval 1637-1712 (PPKFSTAIRI…DLRAFLGADE (76 aa)). O-(pantetheine 4'-phosphoryl)serine is present on S1671. The tract at residues 1716 to 1735 (ESSSSAASDSGRDTTTTGSA) is disordered. The 76-residue stretch at 1748-1823 (EVEFERALEI…DLKTMLAREM (76 aa)) folds into the Carrier 2 domain. Residue S1782 is modified to O-(pantetheine 4'-phosphoryl)serine. The interval 1897 to 2145 (VTGASGGLGS…NWTPVNDIAD (249 aa)) is reductase (R) domain.

It participates in polyketide biosynthesis. Non-reducing polyketide synthase; part of the gene cluster that mediates the biosynthesis of fusarubins, highly pigmented naphthoquinones responsible for the coloration of the fruiting bodies. The non-reducing polyketide synthase FSR1 is responsible for the condensation of seven acetyl-CoA units to yield a haptaketide. After rings A and B are formed by aldol-type cyclization, the PKS-derived product is released as 6-O-demethylfusarubinaldehyde. Then, two hydroxyl groups at C-5 and C-10 are incorporated by FSR3, and simultaneously hydroxyl groups at C-6 and C-8 are methylated by FSR2. The aldehyde is, on the one hand, reduced by FSR3 to 8-O-methylfusarubin alcohol, which equilibrates mainly with 8-O-methylfusarubin and only small amounts of 8-O-methylnectriafurone. On the other hand, the aldehyde can be oxidized to form 8-O-methylfusarubinic acid, a reaction driven by FSR3 equilibrating with 8-O-methylfusarubinlactone, finally resulting in 8-O-methylanhydrofusarubinlactol after a further reduction step and loss of water. 8-O-Methylfusarubinic acid can also undergo decarboxylation, resulting in 8-O-methyl-13-hydroxynorjavanicin after another hydroxylation step at C-13. Both steps are most likely also accomplished by FSR3. No enzymatic function has been determined so far for either FSR4 and FSR5. Their deletion does not alter the product spectrum, but the possibility that they catalyze specific enzymatic steps during perithecium development cannot be ruled out. FSR4 might possess a regulatory function in the biosynthesis of fusarubins. This is Non-reducing polyketide synthase fsr1 from Gibberella fujikuroi (strain CBS 195.34 / IMI 58289 / NRRL A-6831) (Bakanae and foot rot disease fungus).